Reading from the N-terminus, the 461-residue chain is tRNA modification GTPase MnmE (461 aa).

Residues arginine 23, glutamate 88, and arginine 127 each contribute to the (6S)-5-formyl-5,6,7,8-tetrahydrofolate site. In terms of domain architecture, TrmE-type G spans 223 to 382 (GLSTVIVGKP…IEDALAEMVY (160 aa)). Residue asparagine 233 coordinates K(+). GTP-binding positions include 233 to 238 (NVGKSS), 252 to 258 (TDVPGTT), and 277 to 280 (DTAG). Serine 237 is a binding site for Mg(2+). Residues threonine 252, valine 254, and threonine 257 each contribute to the K(+) site. A Mg(2+)-binding site is contributed by threonine 258. Lysine 461 is a binding site for (6S)-5-formyl-5,6,7,8-tetrahydrofolate.

Belongs to the TRAFAC class TrmE-Era-EngA-EngB-Septin-like GTPase superfamily. TrmE GTPase family. As to quaternary structure, homodimer. Heterotetramer of two MnmE and two MnmG subunits. The cofactor is K(+).

Its subcellular location is the cytoplasm. Functionally, exhibits a very high intrinsic GTPase hydrolysis rate. Involved in the addition of a carboxymethylaminomethyl (cmnm) group at the wobble position (U34) of certain tRNAs, forming tRNA-cmnm(5)s(2)U34. The protein is tRNA modification GTPase MnmE of Alkaliphilus oremlandii (strain OhILAs) (Clostridium oremlandii (strain OhILAs)).